We begin with the raw amino-acid sequence, 97 residues long: NADH-ubiquinone oxidoreductase chain 4L (97 aa).

A run of 3 helical transmembrane segments spans residues 1-21 (MALLIIILSMFYLGLMGILLN), 23-43 (LHFLSILLCLELLLISLFIGI), and 60-80 (LLLLTLSACEASIGLSLMVAL).

The protein belongs to the complex I subunit 4L family.

The protein resides in the mitochondrion membrane. It carries out the reaction a ubiquinone + NADH + 5 H(+)(in) = a ubiquinol + NAD(+) + 4 H(+)(out). Core subunit of the mitochondrial membrane respiratory chain NADH dehydrogenase (Complex I) that is believed to belong to the minimal assembly required for catalysis. Complex I functions in the transfer of electrons from NADH to the respiratory chain. The immediate electron acceptor for the enzyme is believed to be ubiquinone. In Paracentrotus lividus (Common sea urchin), this protein is NADH-ubiquinone oxidoreductase chain 4L (ND4L).